Consider the following 893-residue polypeptide: AP-4 complex accessory subunit RUSC1 (893 aa).

4 disordered regions span residues 31-223 (ELRE…GKAE), 237-332 (EKTE…KDRS), 339-358 (SPDTELPPTGSLGGSLAPPR), and 366-444 (LRSR…RAHA). The span at 77–87 (HGSSIENQQDP) shows a compositional bias: polar residues. 2 stretches are compositionally biased toward low complexity: residues 95-117 (SPSDPGCSSSLSSCSDLSPDESP) and 149-165 (PSTCSPDSFCCSPDSCS). Positions 177–187 (SNCNALTTCQD) are enriched in polar residues. Basic and acidic residues predominate over residues 237–257 (EKTEAGWKTIEDSDSGRKTDE). Pro residues-rich tracts occupy residues 373–382 (QPPPVPPRDP) and 390–399 (PPRPPPPPVP). Residues 463-598 (MAEAQSGTGQ…FHAFILGLLN (136 aa)) are interaction with TRAF6. One can recognise an RUN domain in the interval 515–659 (DVGHLVLTTL…LTFHLDLLFE (145 aa)). The segment at 599 to 665 (TKQLELWFSS…LLFEHHHHLP (67 aa)) is interaction with IKBKG. Disordered regions lie at residues 700 to 721 (RGTSGESTTDSSTPSARPPAGS) and 751 to 772 (HGTTAEAAQEAPPPTEQTTPGR). Low complexity-rich tracts occupy residues 702 to 714 (TSGESTTDSSTPS) and 754 to 770 (TAEAAQEAPPPTEQTTP). An SH3 domain is found at 835 to 893 (QADRAVRALCDHTAAGPDQLSFQRGELLRVIATVDEDWLRCGRDGVEGLVPVGYTSLVL).

As to quaternary structure, associated component of the adapter-like complex 4 (AP-4). Interacts with IKBKG and TRAF6. Interacts with F-actin, acetylated actin, TUBB3, STX1A, KIF5B and KLC1. In terms of processing, phosphorylated on serine residues following nuclear translocation. Post-translationally, polyubiquitinated; polyubiquitination involves TRAF6. In terms of tissue distribution, expressed in brain, brain stem and spinal cord (at protein level).

It localises to the cytoplasm. Its subcellular location is the nucleus. It is found in the cytoskeleton. The protein resides in the cytoplasmic vesicle. The protein localises to the early endosome. It localises to the postsynaptic density. Its subcellular location is the golgi apparatus. Functionally, associates with the adapter-like complex 4 (AP-4) and may therefore play a role in vesicular trafficking of proteins at the trans-Golgi network. Signaling adapter which plays a role in neuronal differentiation. Involved in regulation of NGF-dependent neurite outgrowth. May play a role in neuronal vesicular trafficking, specifically involving pre-synaptic membrane proteins. Seems to be involved in signaling pathways that are regulated by the prolonged activation of MAPK. Can regulate the polyubiquitination of IKBKG and thus may be involved in regulation of the NF-kappa-B pathway. In Mus musculus (Mouse), this protein is AP-4 complex accessory subunit RUSC1.